A 457-amino-acid polypeptide reads, in one-letter code: Putative hexose transporter 12 (457 aa).

The Cytoplasmic portion of the chain corresponds to methionine 1–glycine 2. The helical transmembrane segment at leucine 3–glycine 23 threads the bilayer. The Extracellular portion of the chain corresponds to aspartate 24–arginine 29. Residues isoleucine 30–isoleucine 50 form a helical membrane-spanning segment. Residues asparagine 51–arginine 60 lie on the Cytoplasmic side of the membrane. The helical transmembrane segment at isoleucine 61 to valine 81 threads the bilayer. Over alanine 82–arginine 87 the chain is Extracellular. A helical membrane pass occupies residues glycine 88–threonine 108. Over asparagine 109–arginine 122 the chain is Cytoplasmic. A helical transmembrane segment spans residues valine 123 to proline 143. The Extracellular portion of the chain corresponds to glutamate 144–glutamine 247. N-linked (GlcNAc...) asparagine glycosylation occurs at asparagine 194. Residues threonine 248–glutamate 268 traverse the membrane as a helical segment. The Cytoplasmic segment spans residues arginine 269–threonine 274. Residues cysteine 275–valine 295 form a helical membrane-spanning segment. Topologically, residues threonine 296–valine 319 are extracellular. Residues phenylalanine 320 to valine 340 traverse the membrane as a helical segment. Residues serine 341 to methionine 353 are Cytoplasmic-facing. A helical transmembrane segment spans residues alanine 354 to isoleucine 374. The Extracellular portion of the chain corresponds to threonine 375 to asparagine 379. The chain crosses the membrane as a helical span at residues phenylalanine 380–phenylalanine 400. Residues valine 401–serine 457 are Cytoplasmic-facing.

This sequence belongs to the major facilitator superfamily. Sugar transporter (TC 2.A.1.1) family.

It localises to the membrane. In terms of biological role, probable glucose transporter. This chain is Putative hexose transporter 12 (HXT12), found in Saccharomyces cerevisiae (strain ATCC 204508 / S288c) (Baker's yeast).